We begin with the raw amino-acid sequence, 144 residues long: MAKKIVGFVKLQVPAGKANPSPPIGPALGQRGLNIMEFCKAFNAQTQGVEPGLPLPVVITAYADKSFTFIIKTPPAVTLIKKAIKLDKGSATPHTAKVGKITRAQLEEIAKTKMKDMTAADLDAAVRTIAGSARSMGVTVEGVV.

Belongs to the universal ribosomal protein uL11 family. In terms of assembly, part of the ribosomal stalk of the 50S ribosomal subunit. Interacts with L10 and the large rRNA to form the base of the stalk. L10 forms an elongated spine to which L12 dimers bind in a sequential fashion forming a multimeric L10(L12)X complex. One or more lysine residues are methylated.

Functionally, forms part of the ribosomal stalk which helps the ribosome interact with GTP-bound translation factors. The sequence is that of Large ribosomal subunit protein uL11 from Polaromonas sp. (strain JS666 / ATCC BAA-500).